A 212-amino-acid chain; its full sequence is Pyridoxine/pyridoxamine 5'-phosphate oxidase (212 aa).

Substrate contacts are provided by residues 8 to 11 and lysine 66; that span reads RREY. FMN contacts are provided by residues 61-66, 76-77, arginine 82, lysine 83, and glutamine 105; these read RIVLLK and FT. 3 residues coordinate substrate: tyrosine 123, arginine 127, and serine 131. Residues 140 to 141 and tryptophan 185 contribute to the FMN site; that span reads QS. 191–193 provides a ligand contact to substrate; sequence RLH. Position 195 (arginine 195) interacts with FMN.

The protein belongs to the pyridoxamine 5'-phosphate oxidase family. As to quaternary structure, homodimer. FMN serves as cofactor.

It carries out the reaction pyridoxamine 5'-phosphate + O2 + H2O = pyridoxal 5'-phosphate + H2O2 + NH4(+). It catalyses the reaction pyridoxine 5'-phosphate + O2 = pyridoxal 5'-phosphate + H2O2. Its pathway is cofactor metabolism; pyridoxal 5'-phosphate salvage; pyridoxal 5'-phosphate from pyridoxamine 5'-phosphate: step 1/1. The protein operates within cofactor metabolism; pyridoxal 5'-phosphate salvage; pyridoxal 5'-phosphate from pyridoxine 5'-phosphate: step 1/1. Functionally, catalyzes the oxidation of either pyridoxine 5'-phosphate (PNP) or pyridoxamine 5'-phosphate (PMP) into pyridoxal 5'-phosphate (PLP). This chain is Pyridoxine/pyridoxamine 5'-phosphate oxidase, found in Shewanella baltica (strain OS155 / ATCC BAA-1091).